The following is a 138-amino-acid chain: Ribosome-binding factor A (138 aa).

The protein belongs to the RbfA family. In terms of assembly, monomer. Binds 30S ribosomal subunits, but not 50S ribosomal subunits or 70S ribosomes.

It localises to the cytoplasm. In terms of biological role, one of several proteins that assist in the late maturation steps of the functional core of the 30S ribosomal subunit. Associates with free 30S ribosomal subunits (but not with 30S subunits that are part of 70S ribosomes or polysomes). Required for efficient processing of 16S rRNA. May interact with the 5'-terminal helix region of 16S rRNA. The protein is Ribosome-binding factor A of Chromobacterium violaceum (strain ATCC 12472 / DSM 30191 / JCM 1249 / CCUG 213 / NBRC 12614 / NCIMB 9131 / NCTC 9757 / MK).